Reading from the N-terminus, the 71-residue chain is Small ribosomal subunit protein bS21 (71 aa).

It belongs to the bacterial ribosomal protein bS21 family.

The sequence is that of Small ribosomal subunit protein bS21 from Buchnera aphidicola subsp. Schizaphis graminum (strain Sg).